Consider the following 107-residue polypeptide: L-rhamnose mutarotase (107 aa).

A substrate-binding site is contributed by Y21. The active-site Proton donor is H25. Residues Y44 and 79–80 (WW) contribute to the substrate site.

Belongs to the rhamnose mutarotase family. Homodimer.

It localises to the cytoplasm. The catalysed reaction is alpha-L-rhamnose = beta-L-rhamnose. Its pathway is carbohydrate metabolism; L-rhamnose metabolism. Functionally, involved in the anomeric conversion of L-rhamnose. This Agrobacterium fabrum (strain C58 / ATCC 33970) (Agrobacterium tumefaciens (strain C58)) protein is L-rhamnose mutarotase.